Consider the following 97-residue polypeptide: Thiosulfate sulfurtransferase/rhodanese-like domain-containing protein 3 (97 aa).

The Rhodanese domain maps to 32 to 84 (YKELKNLLNSKNIMLIDVREIWEILEYQKIPESINVPLDEVGEALQMNPRDFK). N6-succinyllysine is present on Lys-84.

This Homo sapiens (Human) protein is Thiosulfate sulfurtransferase/rhodanese-like domain-containing protein 3 (TSTD3).